The primary structure comprises 183 residues: Holliday junction branch migration complex subunit RuvA (183 aa).

Residues 1-63 (MIVGLIGVVE…EDAHLLYGFL (63 aa)) form a domain I region. Residues 64–139 (EESEKILFER…FFIQDENRPA (76 aa)) form a domain II region. Position 139 (A139) is a region of interest, flexible linker. A domain III region spans residues 139–183 (ARNEVFLALESLGFKSAEINPVLKTLKPHLSIEAAIKEALQQLRS).

This sequence belongs to the RuvA family. As to quaternary structure, homotetramer. Forms an RuvA(8)-RuvB(12)-Holliday junction (HJ) complex. HJ DNA is sandwiched between 2 RuvA tetramers; dsDNA enters through RuvA and exits via RuvB. An RuvB hexamer assembles on each DNA strand where it exits the tetramer. Each RuvB hexamer is contacted by two RuvA subunits (via domain III) on 2 adjacent RuvB subunits; this complex drives branch migration. In the full resolvosome a probable DNA-RuvA(4)-RuvB(12)-RuvC(2) complex forms which resolves the HJ.

It is found in the cytoplasm. Its function is as follows. The RuvA-RuvB-RuvC complex processes Holliday junction (HJ) DNA during genetic recombination and DNA repair, while the RuvA-RuvB complex plays an important role in the rescue of blocked DNA replication forks via replication fork reversal (RFR). RuvA specifically binds to HJ cruciform DNA, conferring on it an open structure. The RuvB hexamer acts as an ATP-dependent pump, pulling dsDNA into and through the RuvAB complex. HJ branch migration allows RuvC to scan DNA until it finds its consensus sequence, where it cleaves and resolves the cruciform DNA. In Helicobacter pylori (strain J99 / ATCC 700824) (Campylobacter pylori J99), this protein is Holliday junction branch migration complex subunit RuvA.